Reading from the N-terminus, the 932-residue chain is MSDLDEEYQLDYFHEEGFERKECPSCGAHFWTRDSERDICGEPPCADYDFIGDPGFDTEYSLEEMREAFLSFFEDHDHERIEPYPVAANRWRDDVLLTQASIYDFQPLVTSGETPPPANPLTISQPCIRMQDIDNVGKTGRHTMAFEMMAHHAFNAREDIDDPDQYAYEGEVYWKSETVAYCDQLLDELGADIEDVTYIEDPWVGGGNAGPAIEVIYRGLELATLVFMCMEQDPDGDYELKDGNRYSYMDTYVVDTGYGLERWTWMSQGTPTVYEAVYPEMISFLKDNAGLDYSDREESLVNRAARLSGKLDIDDVDDVEAARDDIADELGVETDELRALVEPLEDIYAIADHCRTLAYMLGDGIVPSNVGTGYLARMVLRRTKRLADGVGVDAPLDELVDMQAERLDYENRDTVRDIVRTEVEKYRETLERGRRHVERLAEEYAQKGDPIPLDEVIELYDSRGIQPETVEEIAADHGADVEIPDDFYSLVAERHGEADADADDGTLAGDDDRIADLPETEKLYYEEPERTDFEAVVLDVIERDADGETVYDVALDQTMFYPEGGGQPADTGTLSTDDVAAEVTDVQETNGVVLHRTDEAPGKGEFVRGQIDGVRRRRLMQHHTATHIVGHAARQVLGDHVRQAGAQKGVESARFDIRHYERISREEVKRIERVANNIVTDNLPVKQEWPKRNEAEADYGFDIYQGGIPPGETLRLIQVGEDVQACAGTHVLQTGDIGTIKILSTERVQDGVERLVFAAGDAAIEATQRTEDALYDTAEVLDVSPQEVPATAERFFEEWKDRGKRIEELKEQLAEARAHGGDGGEEVDLGGTTAVVQRVDGDMDDLRATANALVEDGTVAVLGSGDDSATFVVAVPDNVDINAGAVVGELADRVGGGGGGPPDFAQGGGPDVDSLDEALDAAPEILRSMLEA.

Zn(2+) is bound by residues histidine 623, histidine 627, cysteine 726, and histidine 730. The interval 893–916 (RVGGGGGGPPDFAQGGGPDVDSLD) is disordered. Residues 894–910 (VGGGGGGPPDFAQGGGP) show a composition bias toward gly residues.

Belongs to the class-II aminoacyl-tRNA synthetase family. Requires Zn(2+) as cofactor.

It localises to the cytoplasm. The catalysed reaction is tRNA(Ala) + L-alanine + ATP = L-alanyl-tRNA(Ala) + AMP + diphosphate. Catalyzes the attachment of alanine to tRNA(Ala) in a two-step reaction: alanine is first activated by ATP to form Ala-AMP and then transferred to the acceptor end of tRNA(Ala). Also edits incorrectly charged Ser-tRNA(Ala) and Gly-tRNA(Ala) via its editing domain. The protein is Alanine--tRNA ligase of Natronomonas pharaonis (strain ATCC 35678 / DSM 2160 / CIP 103997 / JCM 8858 / NBRC 14720 / NCIMB 2260 / Gabara) (Halobacterium pharaonis).